Consider the following 255-residue polypeptide: Electron transfer flavoprotein subunit beta (255 aa).

Residue Ala-2 is modified to N-acetylalanine. Residues Ala-9, 39-42, Cys-66, and 123-134 each bind AMP; these read NPFC and GKQAIDDDCNQT. Residues 183 to 205 form a recognition loop region; it reads ADLRLNEPRYATLPNIMKAKKKK. Lys-200 carries the N6,N6,N6-trimethyllysine; by ETFBKMT; alternate modification. The residue at position 200 (Lys-200) is an N6-acetyllysine; alternate. Lys-200 is subject to N6-methyllysine; alternate. N6,N6,N6-trimethyllysine; by ETFBKMT is present on Lys-203. Lys-210 carries the post-translational modification N6-acetyllysine; alternate. Lys-210 carries the N6-succinyllysine; alternate modification. 2 positions are modified to phosphoserine: Ser-223 and Ser-226. The residue at position 238 (Lys-238) is an N6-acetyllysine. Lys-248 is modified (N6-acetyllysine; alternate). Residue Lys-248 is modified to N6-succinyllysine; alternate.

Belongs to the ETF beta-subunit/FixA family. Heterodimer composed of ETFA and ETFB. Identified in a complex that contains ETFA, ETFB and ETFRF1. Interacts with ACADM. In terms of processing, methylated. Trimethylation at Lys-200 and Lys-203 may negatively regulate the activity in electron transfer from acyl-CoA dehydrogenases.

It localises to the mitochondrion matrix. Functionally, heterodimeric electron transfer flavoprotein that accepts electrons from several mitochondrial dehydrogenases, including acyl-CoA dehydrogenases, glutaryl-CoA and sarcosine dehydrogenase. It transfers the electrons to the main mitochondrial respiratory chain via ETF-ubiquinone oxidoreductase. Required for normal mitochondrial fatty acid oxidation and normal amino acid metabolism. ETFB binds an AMP molecule that probably has a purely structural role. This chain is Electron transfer flavoprotein subunit beta, found in Bos taurus (Bovine).